The chain runs to 277 residues: Probable ABC transporter permease protein y4oR (277 aa).

Helical transmembrane passes span 15–35, 79–99, 109–129, 140–160, 189–209, 213–233, and 242–262; these read LWTL…TWMV, VVTI…AYAL, LLVA…VPVY, TYQA…IWLM, IMMP…FIAV, FLFA…AMLG, and WDAV…FAFI. Residues 74 to 263 enclose the ABC transmembrane type-1 domain; the sequence is IINSAVVTIV…TPVIAFAFIM (190 aa).

It belongs to the binding-protein-dependent transport system permease family. MalFG subfamily.

It is found in the cell inner membrane. In terms of biological role, probably part of the binding-protein-dependent transport system y4oPQRS. This system probably transports a sugar-like molecule. Probably responsible for the translocation of the substrate across the membrane. The chain is Probable ABC transporter permease protein y4oR from Sinorhizobium fredii (strain NBRC 101917 / NGR234).